The primary structure comprises 321 residues: MGQKVSRTDFEWVYTEEPHASRRKIILEKYPQIKKLFGHDPNFKWVAGAMVLTQILALFVVKDLSWSWLIVAAYCFGGIINHSLMLAVHEISHNLAFGHSRPMHNRILGFICNLPIGLPMSISFKKYHLEHHRYQGDEAIDTDIPTLLEARLFDTTFGKFLWVCLQPFFYIFRPLIINPKPPTRLEIINTVVQLTFNALIVYFLGWKPLAYLLIGSILAMGLHPVAGHFISEHYMFAKGFETYSYYGPLNWITFNVGYHNEHHDFPAVPGSRLPEVKRIAKEFYDTMPQHTSWTRVLYDFIMDPAVGPYARVKRRQRGLAS.

6 helical membrane passes run 41 to 61 (PNFKWVAGAMVLTQILALFVV), 68 to 88 (WLIVAAYCFGGIINHSLMLAV), 107 to 127 (ILGFICNLPIGLPMSISFKKY), 157 to 177 (FGKFLWVCLQPFFYIFRPLII), 187 to 206 (IINTVVQLTFNALIVYFLGW), and 208 to 230 (PLAYLLIGSILAMGLHPVAGHFI).

The protein belongs to the fatty acid desaturase type 1 family. DEGS subfamily. As to expression, testes.

Its subcellular location is the endoplasmic reticulum membrane. The protein resides in the membrane. It localises to the mitochondrion. It carries out the reaction an N-acylsphinganine + 2 Fe(II)-[cytochrome b5] + O2 + 2 H(+) = an N-acylsphing-4-enine + 2 Fe(III)-[cytochrome b5] + 2 H2O. The enzyme catalyses an N-acyleicosasphinganine + 2 Fe(II)-[cytochrome b5] + O2 + 2 H(+) = an N-acyleicosasphing-4-enine + 2 Fe(III)-[cytochrome b5] + 2 H2O. The protein operates within sphingolipid metabolism. Has sphingolipid-delta-4-desaturase activity. Converts sphinganine-containing sphingolipids (such as N-acylsphinganines or dihydroceramides) into sphingolipids containing the delta-4-desaturated sphingoid base (E)-sphing-4-enine (such as N-acylsphing-4-enines or ceramides), which are required for many different functions (structural functions as well as signaling). Required to initiate spermatid differentiation among other signals. Required for central spindle assembly and cytokinesis during male meiosis, may act as part of an anchoring mechanism that links membrane-bounded cellular compartments to components of the cytoskeleton. The sequence is that of Sphingolipid delta(4)-desaturase DES1 from Drosophila melanogaster (Fruit fly).